The chain runs to 197 residues: dITP/XTP pyrophosphatase (197 aa).

8-13 is a binding site for substrate; sequence TKNKGK. Glu42 and Asp71 together coordinate Mg(2+). The active-site Proton acceptor is Asp71. Substrate-binding positions include Ser72, 154–157, Lys177, and 182–183; these read FGYD and HR.

The protein belongs to the HAM1 NTPase family. In terms of assembly, homodimer. The cofactor is Mg(2+).

It carries out the reaction XTP + H2O = XMP + diphosphate + H(+). The catalysed reaction is dITP + H2O = dIMP + diphosphate + H(+). It catalyses the reaction ITP + H2O = IMP + diphosphate + H(+). In terms of biological role, pyrophosphatase that catalyzes the hydrolysis of nucleoside triphosphates to their monophosphate derivatives, with a high preference for the non-canonical purine nucleotides XTP (xanthosine triphosphate), dITP (deoxyinosine triphosphate) and ITP. Seems to function as a house-cleaning enzyme that removes non-canonical purine nucleotides from the nucleotide pool, thus preventing their incorporation into DNA/RNA and avoiding chromosomal lesions. This chain is dITP/XTP pyrophosphatase, found in Oceanobacillus iheyensis (strain DSM 14371 / CIP 107618 / JCM 11309 / KCTC 3954 / HTE831).